The chain runs to 466 residues: GTP cyclohydrolase 1 (466 aa).

Residues C342, H345, and C416 each contribute to the Zn(2+) site.

The protein belongs to the GTP cyclohydrolase I family. As to quaternary structure, homodimer.

The catalysed reaction is GTP + H2O = 7,8-dihydroneopterin 3'-triphosphate + formate + H(+). It functions in the pathway cofactor biosynthesis; 7,8-dihydroneopterin triphosphate biosynthesis; 7,8-dihydroneopterin triphosphate from GTP: step 1/1. In terms of biological role, GTP cyclohydrolase 1 is the first enzyme in the biosynthetic pathway leading to folic acid. The polypeptide is GTP cyclohydrolase 1 (GCH1) (Arabidopsis thaliana (Mouse-ear cress)).